Here is a 365-residue protein sequence, read N- to C-terminus: TD and POZ domain-containing protein 3 (365 aa).

The MATH domain occupies 19–149; it reads KFCYNWTISN…EDQFTICCKV (131 aa). The region spanning 188–250 is the BTB domain; that stretch reads TDCCLLVAGH…EMMGFIYTGK (63 aa).

This sequence belongs to the Tdpoz family.

The chain is TD and POZ domain-containing protein 3 from Mus musculus (Mouse).